The sequence spans 457 residues: Argininosuccinate lyase (457 aa).

This sequence belongs to the lyase 1 family. Argininosuccinate lyase subfamily.

It is found in the cytoplasm. It catalyses the reaction 2-(N(omega)-L-arginino)succinate = fumarate + L-arginine. It participates in amino-acid biosynthesis; L-arginine biosynthesis; L-arginine from L-ornithine and carbamoyl phosphate: step 3/3. The protein is Argininosuccinate lyase of Escherichia coli O139:H28 (strain E24377A / ETEC).